Reading from the N-terminus, the 323-residue chain is D-alanine--D-alanine ligase (323 aa).

The 200-residue stretch at 120–319 (LSVLKPYGIK…LEDLFTNAIE (200 aa)) folds into the ATP-grasp domain. 148 to 203 (VKKVGLPCFVKPNKAGSSFGISKVKSEAELPIAIEVAYKEDNEIIIESFLDGTEVS) serves as a coordination point for ATP. Mg(2+) is bound by residues E274, E286, and N288.

The protein belongs to the D-alanine--D-alanine ligase family. Mg(2+) serves as cofactor. It depends on Mn(2+) as a cofactor.

It localises to the cytoplasm. The enzyme catalyses 2 D-alanine + ATP = D-alanyl-D-alanine + ADP + phosphate + H(+). It functions in the pathway cell wall biogenesis; peptidoglycan biosynthesis. Cell wall formation. The chain is D-alanine--D-alanine ligase from Flavobacterium johnsoniae (strain ATCC 17061 / DSM 2064 / JCM 8514 / BCRC 14874 / CCUG 350202 / NBRC 14942 / NCIMB 11054 / UW101) (Cytophaga johnsonae).